Consider the following 1049-residue polypeptide: Presequence protease, mitochondrial (1049 aa).

Residues 1–39 (MLRSYLHLGRHRTPAFRQPLGRLLRPTASILQYAQSRTL) constitute a mitochondrion transit peptide. His-113 is a binding site for Zn(2+). Glu-116 acts as the Proton acceptor in catalysis. His-117 serves as a coordination point for Zn(2+). The active site involves Glu-189. Glu-222 contacts Zn(2+).

It belongs to the peptidase M16 family. PreP subfamily. Monomer and homodimer; homodimerization is induced by binding of the substrate. Zn(2+) is required as a cofactor.

The protein localises to the mitochondrion intermembrane space. The protein resides in the mitochondrion matrix. Functionally, degrades mitochondrial transit peptides after their cleavage in the intermembrane space or in the matrix, and presequence peptides; clearance of these peptides is required to keep the presequence processing machinery running. Preferentially cleaves the N-terminal side of paired basic amino acid residues. Also degrades other unstructured peptides. May function as an ATP-dependent peptidase as opposed to a metalloendopeptidase. This is Presequence protease, mitochondrial (cym1) from Emericella nidulans (strain FGSC A4 / ATCC 38163 / CBS 112.46 / NRRL 194 / M139) (Aspergillus nidulans).